The sequence spans 496 residues: Glycerol kinase (496 aa).

Thr12 lines the ADP pocket. The ATP site is built by Thr12, Thr13, and Ser14. A sn-glycerol 3-phosphate-binding site is contributed by Thr12. Position 16 (Arg16) interacts with ADP. Arg82, Glu83, and Tyr134 together coordinate sn-glycerol 3-phosphate. Glycerol is bound by residues Arg82, Glu83, and Tyr134. His230 is subject to Phosphohistidine; by HPr. Asp244 contacts sn-glycerol 3-phosphate. Glycerol is bound by residues Asp244 and Gln245. Residues Thr266 and Gly309 each coordinate ADP. Residues Thr266, Gly309, Gln313, and Gly410 each coordinate ATP. ADP contacts are provided by Gly410 and Asn414.

This sequence belongs to the FGGY kinase family. In terms of assembly, homotetramer and homodimer (in equilibrium). The phosphoenolpyruvate-dependent sugar phosphotransferase system (PTS), including enzyme I, and histidine-containing protein (HPr) are required for the phosphorylation, which leads to the activation of the enzyme.

The enzyme catalyses glycerol + ATP = sn-glycerol 3-phosphate + ADP + H(+). The protein operates within polyol metabolism; glycerol degradation via glycerol kinase pathway; sn-glycerol 3-phosphate from glycerol: step 1/1. Activated by phosphorylation and inhibited by fructose 1,6-bisphosphate (FBP). Key enzyme in the regulation of glycerol uptake and metabolism. Catalyzes the phosphorylation of glycerol to yield sn-glycerol 3-phosphate. This is Glycerol kinase from Bacillus licheniformis (strain ATCC 14580 / DSM 13 / JCM 2505 / CCUG 7422 / NBRC 12200 / NCIMB 9375 / NCTC 10341 / NRRL NRS-1264 / Gibson 46).